A 368-amino-acid chain; its full sequence is Protein tesmin/TSO1-like CXC 8 (368 aa).

One can recognise a CRC domain in the interval 64–185 (KHKGCRCKQS…KCINCKNVSE (122 aa)).

The protein belongs to the lin-54 family.

It localises to the nucleus. Its function is as follows. Plays a role in development of both male and female reproductive tissues. This is Protein tesmin/TSO1-like CXC 8 (TCX8) from Arabidopsis thaliana (Mouse-ear cress).